We begin with the raw amino-acid sequence, 201 residues long: Recombination protein RecR (201 aa).

The C4-type zinc finger occupies 57 to 74 (CSICGNITATDTDPCVIC). The 97-residue stretch at 82–178 (STVFVVENSR…AVTRLAHGLA (97 aa)) folds into the Toprim domain.

The protein belongs to the RecR family.

May play a role in DNA repair. It seems to be involved in an RecBC-independent recombinational process of DNA repair. It may act with RecF and RecO. The polypeptide is Recombination protein RecR (Leuconostoc mesenteroides subsp. mesenteroides (strain ATCC 8293 / DSM 20343 / BCRC 11652 / CCM 1803 / JCM 6124 / NCDO 523 / NBRC 100496 / NCIMB 8023 / NCTC 12954 / NRRL B-1118 / 37Y)).